The chain runs to 153 residues: Cytochrome c-type biogenesis protein CcmE (153 aa).

Residues 1–7 (MTRKKRR) are Cytoplasmic-facing. The helical; Signal-anchor for type II membrane protein transmembrane segment at 8 to 28 (LYFVVLGMLALFAAAGLTLTA) threads the bilayer. Residues 29–153 (FQDNLVFFYS…PPTAAAAPAP (125 aa)) lie on the Periplasmic side of the membrane. Residues His121 and Tyr125 each coordinate heme. The disordered stretch occupies residues 132–153 (ESLKASGKWQHGPPTAAAAPAP). A compositionally biased stretch (low complexity) spans 144 to 153 (PPTAAAAPAP).

It belongs to the CcmE/CycJ family.

It localises to the cell inner membrane. Heme chaperone required for the biogenesis of c-type cytochromes. Transiently binds heme delivered by CcmC and transfers the heme to apo-cytochromes in a process facilitated by CcmF and CcmH. This Rhodospirillum rubrum (strain ATCC 11170 / ATH 1.1.1 / DSM 467 / LMG 4362 / NCIMB 8255 / S1) protein is Cytochrome c-type biogenesis protein CcmE.